Consider the following 406-residue polypeptide: DAZ-associated protein 1 (406 aa).

At M1 the chain carries N-acetylmethionine. RRM domains lie at 10–97 and 113–190; these read GKLF…RTRP and NKIF…RAEP. The tract at residues 74–117 is disordered; it reads TLDGRNIDPKPCTPRGMQPERTRPKEGWQKGPRSDSSKSNKIFV. Over residues 91-111 the composition is skewed to basic and acidic residues; sequence QPERTRPKEGWQKGPRSDSSK. An N6-acetyllysine modification is found at K150. Residues 186–406 form a disordered region; that stretch reads KRAEPRDSKN…NVQGFHPYRR (221 aa). Positions 195–207 are enriched in polar residues; the sequence is NQAPGQPGASQWG. Residues 247-262 are compositionally biased toward pro residues; the sequence is GPPPAGRGAPPPPPPF. R253 carries the post-translational modification Omega-N-methylarginine. A compositionally biased stretch (low complexity) spans 280–294; the sequence is FPQGYGAPPQFSFGY. Positions 295–315 are enriched in pro residues; the sequence is GPPPPPPDQFAPPGVPPPPAT. Positions 363-378 are enriched in low complexity; the sequence is SDPSQQPPSYGGPSVP. The span at 379-392 shows a compositional bias: gly residues; it reads GSGGPPAGGSGFGR.

Interacts with DAZ and DAZL. Acetylation at Lys-150 is predominantly observed in the nuclear fraction, and may regulate nucleocytoplasmic transport. Mainly expressed in testis. Expressed at much lower level in liver, heart and brain. Also expressed in ovary. Expressed throughout testes development, in both the prenatal and postnatal periods.

The protein localises to the cytoplasm. Its subcellular location is the nucleus. Functionally, RNA-binding protein, which may be required during spermatogenesis. The chain is DAZ-associated protein 1 (Dazap1) from Mus musculus (Mouse).